Reading from the N-terminus, the 474-residue chain is Citrate synthase 4, mitochondrial (474 aa).

Residues 1–16 (MVFFRSVSAFTRLRSR) constitute a mitochondrion transit peptide. Active-site residues include His-308, His-354, and Asp-409.

This sequence belongs to the citrate synthase family. In terms of assembly, homodimer.

It localises to the mitochondrion matrix. It carries out the reaction oxaloacetate + acetyl-CoA + H2O = citrate + CoA + H(+). It functions in the pathway carbohydrate metabolism; tricarboxylic acid cycle; isocitrate from oxaloacetate: step 1/2. In Arabidopsis thaliana (Mouse-ear cress), this protein is Citrate synthase 4, mitochondrial (CSY4).